Consider the following 375-residue polypeptide: Chaperone protein DnaJ (375 aa).

The region spanning 5–70 (DFYETLGVAK…QKRAAYDRYG (66 aa)) is the J domain. A CR-type zinc finger spans residues 136 to 214 (GKTAQIRVPT…CHGQGRVTEE (79 aa)). Positions 149, 152, 166, 169, 188, 191, 202, and 205 each coordinate Zn(2+). CXXCXGXG motif repeat units lie at residues 149-156 (CDVCSGSG), 166-173 (CGTCQGSG), 188-195 (CPTCHGRG), and 202-209 (CPKCHGQG).

It belongs to the DnaJ family. Homodimer. It depends on Zn(2+) as a cofactor.

The protein localises to the cytoplasm. Functionally, participates actively in the response to hyperosmotic and heat shock by preventing the aggregation of stress-denatured proteins and by disaggregating proteins, also in an autonomous, DnaK-independent fashion. Unfolded proteins bind initially to DnaJ; upon interaction with the DnaJ-bound protein, DnaK hydrolyzes its bound ATP, resulting in the formation of a stable complex. GrpE releases ADP from DnaK; ATP binding to DnaK triggers the release of the substrate protein, thus completing the reaction cycle. Several rounds of ATP-dependent interactions between DnaJ, DnaK and GrpE are required for fully efficient folding. Also involved, together with DnaK and GrpE, in the DNA replication of plasmids through activation of initiation proteins. The sequence is that of Chaperone protein DnaJ from Rhizobium etli (strain CIAT 652).